A 367-amino-acid chain; its full sequence is MAVANLTTEQAILTEVRKQNRNRRALRLWLGFVLLALFCLVLVGGATRLTNSGLSITEWKPIHGVIPPLSAAEWDEEFRLYQRIPEFQQLNSAMTVDEFKGIFWWEWAHRLIARGIGVIFALPLIFFWLTGRIEKRLRWPLVGILALGGLQGFIGWWMVSSGLSVRTDVSQYRLATHLVMACLIFAGCMWIMRGLSPHSNDPAPARSSRGFAAAIAIFALFQIYLGALVAGLDAGFSYNTWPLMDGAVIPSDLLIQQPFWINAFENPKTVQFIHRIGAYTLFALTLINMVIALRAAPWTTHARRAVVLFSLVTLQAAIGIATLLMQVPLHWGLLHQAGALVVFGFAVANWRGFYGEYPHATAIAERD.

5 consecutive transmembrane segments (helical) span residues 25-45 (ALRL…LVGG), 111-131 (LIAR…WLTG), 139-159 (WPLV…WWMV), 174-194 (LATH…IMRG), and 210-230 (GFAA…ALVA). His274 is a heme binding site. 3 consecutive transmembrane segments (helical) span residues 276 to 296 (IGAY…LRAA), 305 to 325 (AVVL…TLLM), and 327 to 347 (VPLH…GFAV). Position 335 (His335) interacts with heme.

Belongs to the COX15/CtaA family. Type 2 subfamily. In terms of assembly, interacts with CtaB. Requires heme b as cofactor.

The protein resides in the cell membrane. It catalyses the reaction Fe(II)-heme o + 2 A + H2O = Fe(II)-heme a + 2 AH2. It participates in porphyrin-containing compound metabolism; heme A biosynthesis; heme A from heme O: step 1/1. Catalyzes the conversion of heme O to heme A by two successive hydroxylations of the methyl group at C8. The first hydroxylation forms heme I, the second hydroxylation results in an unstable dihydroxymethyl group, which spontaneously dehydrates, resulting in the formyl group of heme A. This is Heme A synthase from Rhizobium etli (strain CIAT 652).